Here is a 446-residue protein sequence, read N- to C-terminus: NADH-ubiquinone oxidoreductase chain 4 (446 aa).

13 consecutive transmembrane segments (helical) span residues 4-24, 56-76, 93-113, 114-134, 141-161, 182-202, 212-232, 245-265, 272-292, 297-317, 330-350, 373-393, and 426-446; these read IILFLLFLTPVCFINNMYWMV, MLSYGLVLLSLWICSLMLLAS, IVILLLLLVLTFSSMSLFMFY, LFFESSLIPTLFLILGWGYQP, VYLLFYTLLVSLPMLIGIFYV, LLYFCLLCAFLVKMPMFLVHL, PVSGSMILAGIMLKLGGYGLL, YSFVWISISLVGGVLMSLVCL, ALIAYSSVAHMGIVLAGLLTM, LCGSYTLMIAHGLCSSGLFCL, MLINKGLLNFMPAMTLWWFLL, IVSWSWISMIMLSFLSFFSAA, and LLHWLPLNLLILKSESCILWL.

Belongs to the complex I subunit 4 family.

The protein resides in the mitochondrion membrane. The enzyme catalyses a ubiquinone + NADH + 5 H(+)(in) = a ubiquinol + NAD(+) + 4 H(+)(out). Its function is as follows. Core subunit of the mitochondrial membrane respiratory chain NADH dehydrogenase (Complex I) that is believed to belong to the minimal assembly required for catalysis. Complex I functions in the transfer of electrons from NADH to the respiratory chain. The immediate electron acceptor for the enzyme is believed to be ubiquinone. The polypeptide is NADH-ubiquinone oxidoreductase chain 4 (mt:ND4) (Drosophila yakuba (Fruit fly)).